The following is a 256-amino-acid chain: Endonuclease NucS (256 aa).

The interval 62-97 (AAKSAQHSRESVAGGAVDGDSATHSPESVAAGEPEK) is disordered.

This sequence belongs to the NucS endonuclease family.

It localises to the cytoplasm. Functionally, cleaves both 3' and 5' ssDNA extremities of branched DNA structures. The chain is Endonuclease NucS from Bifidobacterium longum (strain NCC 2705).